Consider the following 875-residue polypeptide: SPbeta prophage-derived uncharacterized protein YomG (875 aa).

The stretch at 351-381 forms a coiled coil; sequence AKKAEISRINSQITNISQEIEKLKDRLSMDK. The Fibronectin type-III domain maps to 537 to 648; it reads PVANPTILNN…SIDSSGRILS (112 aa).

This is SPbeta prophage-derived uncharacterized protein YomG (yomG) from Bacillus subtilis (strain 168).